The chain runs to 242 residues: DNA repair protein RecO (242 aa).

Belongs to the RecO family. In terms of assembly, monomer.

In terms of biological role, involved in DNA repair and RecF pathway recombination. In Shigella dysenteriae serotype 1 (strain Sd197), this protein is DNA repair protein RecO.